Here is a 281-residue protein sequence, read N- to C-terminus: Microtubule-associated protein RP/EB family member 3 (281 aa).

The 103-residue stretch at 14-116 (NLSRHDMLAW…FIQWFKKFFD (103 aa)) folds into the Calponin-homology (CH) domain. A disordered region spans residues 157–181 (VPQRTSPTGPKNMQTSGRLSNVAPP). A compositionally biased stretch (polar residues) spans 158-175 (PQRTSPTGPKNMQTSGRL). Phosphoserine is present on residues Ser162 and Ser176. Positions 194–264 (GGHETDAQIL…LYATEEGFAP (71 aa)) constitute an EB1 C-terminal domain. Residues 217 to 260 (DGLEKERDFYFSKLRDIELICQEHESENSPVISGIIGILYATEE) are APC-binding. The interval 217 to 281 (DGLEKERDFY…EHQQEDQDEY (65 aa)) is DCTN1-binding. The disordered stretch occupies residues 261 to 281 (GFAPPEDDEIEEHQQEDQDEY). The span at 272–281 (EHQQEDQDEY) shows a compositional bias: basic and acidic residues.

Belongs to the MAPRE family. In terms of assembly, homodimer. Heterodimer with MAPRE1. Binds monomeric and polymerized GTP-bound tubulin. Interacts with APC2. Interacts with DCTN1 and SRCIN1. Binds to the C-terminal domain of APC. Interacts (via C-terminus) with CLIP1. Interacts with SLAIN2 and SLAIN1. Interacts with AKAP9. Interacts with PDE4DIP. Interacts with PDE4DIP isoform 13/MMG8/SMYLE; this interaction is required for its recruitment to the Golgi apparatus. In terms of tissue distribution, predominantly expressed in brain and muscle.

Its subcellular location is the cytoplasm. It localises to the cytoskeleton. Its function is as follows. Plus-end tracking protein (+TIP) that binds to the plus-end of microtubules and regulates the dynamics of the microtubule cytoskeleton. Promotes microtubule growth. May be involved in spindle function by stabilizing microtubules and anchoring them at centrosomes. Also acts as a regulator of minus-end microtubule organization: interacts with the complex formed by AKAP9 and PDE4DIP, leading to recruit CAMSAP2 to the Golgi apparatus, thereby tethering non-centrosomal minus-end microtubules to the Golgi, an important step for polarized cell movement. Promotes elongation of CAMSAP2-decorated microtubule stretches on the minus-end of microtubules. This is Microtubule-associated protein RP/EB family member 3 (MAPRE3) from Homo sapiens (Human).